Consider the following 134-residue polypeptide: Histone H2A.Z (134 aa).

The interval 1–31 is disordered; the sequence is MSGKAHGGKGKSGAKDSGSLRSQSSSARAGL. Residue S2 is modified to N-acetylserine. K4, K9, K11, and K15 each carry N6-acetyllysine. Residues 15-31 are compositionally biased toward low complexity; the sequence is KDSGSLRSQSSSARAGL. Positions 98 to 108 are interaction with VPS72; sequence GDDELDSLIRA.

It belongs to the histone H2A family. The nucleosome is a histone octamer containing two molecules each of H2A, H2B, H3 and H4 assembled in one H3-H4 heterotetramer and two H2A-H2B heterodimers. The octamer wraps approximately 147 bp of DNA. H2A or its variant H2A.Z forms a heterodimer with H2B. H2A.Z associates with the VPS72/SWC2 subunit of the SWR1 chromatin remodeling complex. Also interacts with RBP1/DNA-directed RNA polymerase II largest subunit. Interacts with NAP1. Interacts with MPS3. Post-translationally, acetylated by ESA1, a component of the NuA4 histone acetyltransferase (HAT) complex, and/or by GCN5, a component of the SAGA complex, to form H2A.ZK3Ac, H2A.ZK8Ac, H2A.ZK10Ac and H2A.ZK14Ac once deposited into chromatin. Acetylation is required for function at telomeres. H2A.ZK14Ac is acetylated at the promoters of active genes.

The protein resides in the nucleus. It localises to the chromosome. Its function is as follows. Variant histone H2A which can replace H2A in some nucleosomes. Nucleosomes wrap and compact DNA into chromatin, limiting DNA accessibility to the cellular machineries which require DNA as a template. Histones thereby play a central role in transcription regulation, DNA repair, DNA replication and chromosomal stability. DNA accessibility is regulated via a complex set of post-translational modifications of histones, also called histone code, and nucleosome remodeling. This variant is enriched at promoters, it may keep them in a repressed state until the appropriate activation signal is received. Near telomeres, it may counteract gene silencing caused by the spread of heterochromatin proteins. Required for the RNA polymerase II and SPT15/TBP recruitment to the target genes. Involved in chromosome stability. Required to target MPS3 to the inner membrane of the nuclear envelope. This chain is Histone H2A.Z, found in Saccharomyces cerevisiae (strain ATCC 204508 / S288c) (Baker's yeast).